Here is an 81-residue protein sequence, read N- to C-terminus: Large ribosomal subunit protein uL24 (81 aa).

The protein belongs to the universal ribosomal protein uL24 family. Part of the 50S ribosomal subunit.

One of two assembly initiator proteins, it binds directly to the 5'-end of the 23S rRNA, where it nucleates assembly of the 50S subunit. In terms of biological role, one of the proteins that surrounds the polypeptide exit tunnel on the outside of the subunit. The chain is Large ribosomal subunit protein uL24 from Chloroherpeton thalassium (strain ATCC 35110 / GB-78).